A 124-amino-acid chain; its full sequence is Large ribosomal subunit protein bL17 (124 aa).

Belongs to the bacterial ribosomal protein bL17 family. In terms of assembly, part of the 50S ribosomal subunit. Contacts protein L32.

The chain is Large ribosomal subunit protein bL17 from Trichlorobacter lovleyi (strain ATCC BAA-1151 / DSM 17278 / SZ) (Geobacter lovleyi).